The following is a 195-amino-acid chain: WYSSMFAANIKQEPISHHHHHHHAHHSHHAHDSNSNSNASSPHQSPLPSPNPPSHTNLQLEQYLKQQQQQQQQHQHQQQQQPMDTLCAAAMTPSPSNNDQNSLGWLVGLPNPMQTIMPANMRPSPTATTATAAAAAPTTTAAAIALQANDKLQALTPPMDVTPPKSPAKSQQSCAEPEKEHDLMSNSSEDMKYMA.

Disordered regions lie at residues serine 16–asparagine 57, leucine 64–methionine 83, and leucine 155–alanine 195. Positions histidine 17 to histidine 29 are enriched in basic residues. Composition is skewed to low complexity over residues serine 33 to glutamine 44 and glutamine 66 to glutamine 81. Residues glutamate 176 to alanine 195 are compositionally biased toward basic and acidic residues.

The protein belongs to the hunchback C2H2-type zinc-finger protein family.

The protein localises to the nucleus. In terms of biological role, gap class segmentation protein that controls development of head structures. The sequence is that of Protein hunchback (hb) from Drosophila dasycnemia (Fruit fly).